Here is a 513-residue protein sequence, read N- to C-terminus: Putative ADP-ribosyl glycohydrolase L444 (513 aa).

Residues 1–23 (MSDKIQSRESKTTKPTKTEKISD) show a composition bias toward basic and acidic residues. Positions 1–33 (MSDKIQSRESKTTKPTKTEKISDKSGNLSQVKS) are disordered. The span at 24–33 (KSGNLSQVKS) shows a compositional bias: polar residues.

Belongs to the ADP-ribosylglycohydrolase family.

This Acanthamoeba polyphaga mimivirus (APMV) protein is Putative ADP-ribosyl glycohydrolase L444.